A 326-amino-acid chain; its full sequence is MNKGVSLDNCVPKFFKVYLPDESGDDMVLPISFTRFLPKSLPETVTVRSISGNIWKLELKKCCGDDDTEKFVMVNGWKRIVKDEDLKGGDFLEFEFDGSSCFHFCIYEHRTMCKKIRRSSDQSEEIKVESDSDEQNQASDDVLSLDEDDDDSDYNCGEDNDSDDYADEAAVEKDDNDADDEDVDNVADDVPVEDDDYVEAFDSRDHAKADDDDEDERQYLDDRENPSFTLILNPKKKSQLLIPARVIKDYDLHFPESITLVDPLVKKFGTLEKQIKIQTNGSVFVKGFGSIIRRNKVKTTDKMIFEIKKTGDNNLVQTIKIHIISG.

The TF-B3 DNA-binding region spans 12 to 110; it reads PKFFKVYLPD…CFHFCIYEHR (99 aa). The tract at residues 124–222 is disordered; the sequence is EEIKVESDSD…DEDERQYLDD (99 aa). Positions 143 to 199 are enriched in acidic residues; sequence LSLDEDDDDSDYNCGEDNDSDDYADEAAVEKDDNDADDEDVDNVADDVPVEDDDYVE.

Its subcellular location is the nucleus. The polypeptide is B3 domain-containing protein At5g60130 (Arabidopsis thaliana (Mouse-ear cress)).